Reading from the N-terminus, the 83-residue chain is Small ribosomal subunit protein uS17 (83 aa).

This sequence belongs to the universal ribosomal protein uS17 family. As to quaternary structure, part of the 30S ribosomal subunit.

Functionally, one of the primary rRNA binding proteins, it binds specifically to the 5'-end of 16S ribosomal RNA. The sequence is that of Small ribosomal subunit protein uS17 from Gloeobacter violaceus (strain ATCC 29082 / PCC 7421).